The primary structure comprises 165 residues: Histone H1 (165 aa).

The interval 1-165 (GKQSTSKSVT…KKATKGSKKN (165 aa)) is disordered. Residues 9-18 (VTREKKDVKK) show a composition bias toward basic and acidic residues. A compositionally biased stretch (basic residues) spans 20–31 (VAPKKAIKKVTK). The span at 32 to 41 (KSTTPVKTSK) shows a compositional bias: low complexity. Residues T48 and T54 each carry the phosphothreonine modification. Residues 68-89 (TMKESVSDAKKTVHKSAGDKKL) are compositionally biased toward basic and acidic residues. Phosphoserine is present on S83. Positions 103–117 (KIVHPAKKAAAKPKT) are enriched in basic residues. T117 carries the post-translational modification Phosphothreonine. The span at 118-157 (AKKEVKKDTKPVKKDAKKDTKPVKKDAKKDTKPAKKDTKK) shows a compositional bias: basic and acidic residues.

Post-translationally, cell-growth/division-associated phosphorylation by a CDC2-like kinase. Is additionally phosphorylated on either Ser-33, Thr-34 or Thr-35, and on either Thr-39 or Ser-40.

It is found in the nucleus. Its subcellular location is the chromosome. Histones H1 are necessary for the condensation of nucleosome chains into higher-order structures. The protein is Histone H1 (HHO) of Tetrahymena pyriformis.